Reading from the N-terminus, the 84-residue chain is Small ribosomal subunit protein bS20 (84 aa).

This sequence belongs to the bacterial ribosomal protein bS20 family.

Binds directly to 16S ribosomal RNA. This Parabacteroides distasonis (strain ATCC 8503 / DSM 20701 / CIP 104284 / JCM 5825 / NCTC 11152) protein is Small ribosomal subunit protein bS20.